A 245-amino-acid chain; its full sequence is MKLKKRVSMFLVALTMCGGLFVTPAKAVKTTNYAEEIAALQPGTTPEEIMKSASQIAKQQHVKQDVILKQFYKEITADKAEGDRLAKESGMSIMGGSSGTKKLPTSAKGNIYYTNSYTAYYNHGHVGMYSAADKIVESVPSDGVRQIAYNARDVEDNSIVQTVSVSSSQKTAAADWAVSKVGDPYSFNFVNNRNTGHDGAKNCSKLLWSAFLLKAGIDIDSNGGLGVYPRDITSSSYTTTIMTIY.

The first 27 residues, 1–27, serve as a signal peptide directing secretion; the sequence is MKLKKRVSMFLVALTMCGGLFVTPAKA.

This is an uncharacterized protein from Bacillus subtilis (strain 168).